A 155-amino-acid chain; its full sequence is MPELFAYTDGACSGNPGPGGWGVLLRAIEGETVLKERELCGGEAETTNNRMELLAAINALETLERPSKITVVTDSAYVKNGVTGWIFGWKRNGWKTAGKKPVKNVELWQRLDLAQARHDVTWKWVKGHAGHPENERADELARAGMKPFKPKKARA.

An RNase H type-1 domain is found at 1–146 (MPELFAYTDG…ADELARAGMK (146 aa)). Positions 9, 52, 74, and 138 each coordinate Mg(2+).

The protein belongs to the RNase H family. In terms of assembly, monomer. Requires Mg(2+) as cofactor.

It localises to the cytoplasm. It carries out the reaction Endonucleolytic cleavage to 5'-phosphomonoester.. Its function is as follows. Endonuclease that specifically degrades the RNA of RNA-DNA hybrids. The polypeptide is Ribonuclease H (Ruegeria pomeroyi (strain ATCC 700808 / DSM 15171 / DSS-3) (Silicibacter pomeroyi)).